Here is a 224-residue protein sequence, read N- to C-terminus: Response regulator protein GraR (224 aa).

Positions 2–115 constitute a Response regulatory domain; that stretch reads QILLVEDDNT…VLIAKLQAIY (114 aa). A 4-aspartylphosphate modification is found at Asp51. The ompR/PhoB-type DNA-binding region spans 126 to 224; sequence KRTLSWQDAT…KVGKGYLAHE (99 aa).

In terms of processing, phosphorylated by GraS.

Its subcellular location is the cytoplasm. Its function is as follows. Member of the two-component regulatory system GraR/GraS involved in resistance against cationic antimicrobial peptides (CAMPs). The protein is Response regulator protein GraR (graR) of Staphylococcus epidermidis (strain ATCC 35984 / DSM 28319 / BCRC 17069 / CCUG 31568 / BM 3577 / RP62A).